The following is a 931-amino-acid chain: Glycine dehydrogenase (decarboxylating) (931 aa).

Position 684 is an N6-(pyridoxal phosphate)lysine (Lys-684).

Belongs to the GcvP family. As to quaternary structure, the glycine cleavage system is composed of four proteins: P, T, L and H. It depends on pyridoxal 5'-phosphate as a cofactor.

It catalyses the reaction N(6)-[(R)-lipoyl]-L-lysyl-[glycine-cleavage complex H protein] + glycine + H(+) = N(6)-[(R)-S(8)-aminomethyldihydrolipoyl]-L-lysyl-[glycine-cleavage complex H protein] + CO2. Its function is as follows. The glycine cleavage system catalyzes the degradation of glycine. The P protein binds the alpha-amino group of glycine through its pyridoxal phosphate cofactor; CO(2) is released and the remaining methylamine moiety is then transferred to the lipoamide cofactor of the H protein. The polypeptide is Glycine dehydrogenase (decarboxylating) (Bartonella henselae (strain ATCC 49882 / DSM 28221 / CCUG 30454 / Houston 1) (Rochalimaea henselae)).